Reading from the N-terminus, the 358-residue chain is Ion-translocating oxidoreductase complex subunit D (358 aa).

Transmembrane regions (helical) follow at residues 16–36 (VSRTMLTVVAALTPATLFGLW), 38–58 (FGWPAIFLFLTTVVSAWVFEV), 68–90 (IRPFATDGSAILSGWLVAMTLPP), 128–148 (AMLVVALPVQMTTWIAPVGLL), 206–226 (FVPGSLGETSTVLLALGGLLL), 236–256 (IPLAVLGTLVTLSAICSFLAP), and 286–306 (PVTTAGKWVYGIGIGTLVFVI).

It belongs to the NqrB/RnfD family. In terms of assembly, the complex is composed of six subunits: RnfA, RnfB, RnfC, RnfD, RnfE and RnfG. FMN is required as a cofactor.

The protein localises to the cellular chromatophore membrane. Functionally, part of a membrane-bound complex that couples electron transfer with translocation of ions across the membrane. Required for nitrogen fixation. Involved in electron transfer to nitrogenase. In Rhodobacter capsulatus (Rhodopseudomonas capsulata), this protein is Ion-translocating oxidoreductase complex subunit D.